Here is a 244-residue protein sequence, read N- to C-terminus: Inner kinetochore subunit fta7 (244 aa).

The protein belongs to the CENP-Q/OKP1 family. As to quaternary structure, component of the heterotetrameric kinetochore subcomplex COMA, which consists of fta2, fta7, mal2 and mis17. The COMA subcomplex is part of a larger constitutive centromere-associated network (CCAN) (also known as central kinetochore Sim4 complex in fission yeast), which is composed of at least cnl2, cnp3, cnp20, fta1, fta2, fta3, fta4, fta6, fta7, mal2, mhf1, mhf2, mis6, mis15, mis17, sim4 and wip1.

The protein localises to the nucleus. The protein resides in the chromosome. It is found in the centromere. Its subcellular location is the kinetochore. It localises to the cytoplasm. The protein localises to the cytoskeleton. The protein resides in the microtubule organizing center. It is found in the spindle pole body. Its function is as follows. Component of the kinetochore, a multiprotein complex that assembles on centromeric DNA and attaches chromosomes to spindle microtubules, mediating chromosome segregation and sister chromatid segregation during meiosis and mitosis. Component of the inner kinetochore COMA complex, which connects centromere-associated proteins and the outer kinetochore. COMA interacts with other inner kinetochore proteins to form the inner kinetochore constitutive centromere-associated network (CCAN), which serves as a structural platform for outer kinetochore assembly. This is Inner kinetochore subunit fta7 (fta7) from Schizosaccharomyces pombe (strain 972 / ATCC 24843) (Fission yeast).